The following is a 139-amino-acid chain: MAGGKGKTGGKTGGKGDSHVKTTKSHSAKAGLQFPCGRIKRHLRTITRQKTRIGAKASIYLTAVLEYLTAEVLELAGNAAKDLKVKRITPRHLQLAIRGDEELDTLIRATIAFGGVLPHINRALLLKVEQKKKGAKVEA.

Residues 1-13 are compositionally biased toward gly residues; the sequence is MAGGKGKTGGKTG. Positions 1–28 are disordered; it reads MAGGKGKTGGKTGGKGDSHVKTTKSHSA. An N6-acetyllysine mark is found at K5 and K11.

It belongs to the histone H2A family. In terms of assembly, the nucleosome is a histone octamer containing two molecules each of H2A, H2B, H3 and H4 assembled in one H3-H4 heterotetramer and two H2A-H2B heterodimers. The octamer wraps approximately 147 bp of DNA. H2A or its variant H2A.Z forms a heterodimer with H2B. H2A.Z associates with the VPS72/SWC2 subunit of the SWR1 chromatin remodeling complex. Also interacts with RBP1/DNA-directed RNA polymerase II largest subunit. In terms of processing, acetylated once deposited into chromatin.

It localises to the nucleus. Its subcellular location is the chromosome. Variant histone H2A which can replace H2A in some nucleosomes. Nucleosomes wrap and compact DNA into chromatin, limiting DNA accessibility to the cellular machineries which require DNA as a template. Histones thereby play a central role in transcription regulation, DNA repair, DNA replication and chromosomal stability. DNA accessibility is regulated via a complex set of post-translational modifications of histones, also called histone code, and nucleosome remodeling. This variant is enriched at promoters, it may keep them in a repressed state until the appropriate activation signal is received. Near telomeres, it may counteract gene silencing caused by the spread of heterochromatin proteins. Required for the RNA polymerase II and SPT15/TBP recruitment to the target genes. Involved in chromosome stability. The sequence is that of Histone H2A.Z (HTZ1) from Phaeosphaeria nodorum (strain SN15 / ATCC MYA-4574 / FGSC 10173) (Glume blotch fungus).